The chain runs to 116 residues: uncharacterized protein (116 aa).

The chain crosses the membrane as a helical span at residues 22–42 (LIFLVVNLKVPAVGLELFLLV).

The protein localises to the membrane. This is an uncharacterized protein from Saccharomyces cerevisiae (strain ATCC 204508 / S288c) (Baker's yeast).